Here is a 318-residue protein sequence, read N- to C-terminus: uncharacterized protein (318 aa).

The stretch at 67–157 forms a coiled coil; the sequence is LAFDELEKEK…SLKAIQTSQE (91 aa). A disordered region spans residues 172 to 318; that stretch reads ESTNKVEKNA…KGFFARLFNL (147 aa). Basic and acidic residues-rich tracts occupy residues 175–193 and 219–236; these read NKVE…KDSK and KVDK…EKAS. Polar residues predominate over residues 237–248; it reads VEQSKNGNAAET. 2 stretches are compositionally biased toward basic and acidic residues: residues 249–274 and 300–310; these read SNKE…HAEA and SEPKPQEEKKG.

This is an uncharacterized protein from Staphylococcus aureus (strain MW2).